A 490-amino-acid polypeptide reads, in one-letter code: Aspartyl/glutamyl-tRNA(Asn/Gln) amidotransferase subunit B (490 aa).

It belongs to the GatB/GatE family. GatB subfamily. In terms of assembly, heterotrimer of A, B and C subunits.

The catalysed reaction is L-glutamyl-tRNA(Gln) + L-glutamine + ATP + H2O = L-glutaminyl-tRNA(Gln) + L-glutamate + ADP + phosphate + H(+). It catalyses the reaction L-aspartyl-tRNA(Asn) + L-glutamine + ATP + H2O = L-asparaginyl-tRNA(Asn) + L-glutamate + ADP + phosphate + 2 H(+). In terms of biological role, allows the formation of correctly charged Asn-tRNA(Asn) or Gln-tRNA(Gln) through the transamidation of misacylated Asp-tRNA(Asn) or Glu-tRNA(Gln) in organisms which lack either or both of asparaginyl-tRNA or glutaminyl-tRNA synthetases. The reaction takes place in the presence of glutamine and ATP through an activated phospho-Asp-tRNA(Asn) or phospho-Glu-tRNA(Gln). In Burkholderia thailandensis (strain ATCC 700388 / DSM 13276 / CCUG 48851 / CIP 106301 / E264), this protein is Aspartyl/glutamyl-tRNA(Asn/Gln) amidotransferase subunit B.